Here is a 218-residue protein sequence, read N- to C-terminus: Adenylate kinase (218 aa).

10–15 (GAGKGT) contacts ATP. An NMP region spans residues 30–59 (STGDMLRAAVKAGTPLGIEAKKVMDAGGLV). AMP is bound by residues Thr-31, Arg-36, 57–59 (GLV), 85–88 (GFPR), and Gln-92. The segment at 122–159 (GRRSHAASGRTYHVKFNPPKVAGVDDVTGEPLIQRDDD) is LID. ATP is bound by residues Arg-123 and 132–133 (TY). 2 residues coordinate AMP: Arg-156 and Arg-167. ATP is bound at residue Gly-203.

Belongs to the adenylate kinase family. As to quaternary structure, monomer.

It localises to the cytoplasm. The catalysed reaction is AMP + ATP = 2 ADP. It functions in the pathway purine metabolism; AMP biosynthesis via salvage pathway; AMP from ADP: step 1/1. Its function is as follows. Catalyzes the reversible transfer of the terminal phosphate group between ATP and AMP. Plays an important role in cellular energy homeostasis and in adenine nucleotide metabolism. This is Adenylate kinase from Albidiferax ferrireducens (strain ATCC BAA-621 / DSM 15236 / T118) (Rhodoferax ferrireducens).